The sequence spans 399 residues: Succinate--CoA ligase [ADP-forming] subunit beta (399 aa).

Positions 9–254 (KAVLQPFGVS…ETEEDAKEIE (246 aa)) constitute an ATP-grasp domain. Residues lysine 46, 53–55 (GRG), glutamate 109, serine 112, and glutamate 117 each bind ATP. Mg(2+)-binding residues include asparagine 209 and aspartate 223. Residues asparagine 274 and 331 to 333 (GIM) each bind substrate.

Belongs to the succinate/malate CoA ligase beta subunit family. As to quaternary structure, heterotetramer of two alpha and two beta subunits. The cofactor is Mg(2+).

The enzyme catalyses succinate + ATP + CoA = succinyl-CoA + ADP + phosphate. The catalysed reaction is GTP + succinate + CoA = succinyl-CoA + GDP + phosphate. It functions in the pathway carbohydrate metabolism; tricarboxylic acid cycle; succinate from succinyl-CoA (ligase route): step 1/1. Succinyl-CoA synthetase functions in the citric acid cycle (TCA), coupling the hydrolysis of succinyl-CoA to the synthesis of either ATP or GTP and thus represents the only step of substrate-level phosphorylation in the TCA. The beta subunit provides nucleotide specificity of the enzyme and binds the substrate succinate, while the binding sites for coenzyme A and phosphate are found in the alpha subunit. The chain is Succinate--CoA ligase [ADP-forming] subunit beta from Rhodopseudomonas palustris (strain BisB18).